We begin with the raw amino-acid sequence, 504 residues long: ATP synthase subunit alpha, chloroplastic (504 aa).

Residue 170 to 177 coordinates ATP; it reads GDRQTGKT.

Belongs to the ATPase alpha/beta chains family. As to quaternary structure, F-type ATPases have 2 components, CF(1) - the catalytic core - and CF(0) - the membrane proton channel. CF(1) has five subunits: alpha(3), beta(3), gamma(1), delta(1), epsilon(1). CF(0) has four main subunits: a, b, b' and c.

The protein resides in the plastid. Its subcellular location is the chloroplast thylakoid membrane. It carries out the reaction ATP + H2O + 4 H(+)(in) = ADP + phosphate + 5 H(+)(out). Produces ATP from ADP in the presence of a proton gradient across the membrane. The alpha chain is a regulatory subunit. The polypeptide is ATP synthase subunit alpha, chloroplastic (Triticum aestivum (Wheat)).